We begin with the raw amino-acid sequence, 596 residues long: Elongation factor 4 (596 aa).

The 183-residue stretch at 2-184 (KHIRNFSIIA…VIVEQIPPPE (183 aa)) folds into the tr-type G domain. GTP-binding positions include 14–19 (DHGKST) and 131–134 (NKID).

This sequence belongs to the TRAFAC class translation factor GTPase superfamily. Classic translation factor GTPase family. LepA subfamily.

The protein resides in the cell inner membrane. The catalysed reaction is GTP + H2O = GDP + phosphate + H(+). In terms of biological role, required for accurate and efficient protein synthesis under certain stress conditions. May act as a fidelity factor of the translation reaction, by catalyzing a one-codon backward translocation of tRNAs on improperly translocated ribosomes. Back-translocation proceeds from a post-translocation (POST) complex to a pre-translocation (PRE) complex, thus giving elongation factor G a second chance to translocate the tRNAs correctly. Binds to ribosomes in a GTP-dependent manner. The chain is Elongation factor 4 from Shewanella piezotolerans (strain WP3 / JCM 13877).